We begin with the raw amino-acid sequence, 192 residues long: Photosystem I assembly protein Ycf4 (192 aa).

Transmembrane regions (helical) follow at residues 30-52 (YFWA…SSYL) and 72-94 (IAIG…AIAW).

The protein belongs to the Ycf4 family.

The protein resides in the cellular thylakoid membrane. Its function is as follows. Seems to be required for the assembly of the photosystem I complex. The chain is Photosystem I assembly protein Ycf4 from Thermosynechococcus vestitus (strain NIES-2133 / IAM M-273 / BP-1).